The primary structure comprises 515 residues: Serine/threonine-protein phosphatase PP-Z (515 aa).

Residues 1 to 186 (MGQGSSKHAD…SSTDPDDPET (186 aa)) form a disordered region. Residues 17 to 30 (PSFSRSDTQGSIKS) show a composition bias toward polar residues. The residue at position 18 (Ser-18) is a Phosphoserine. Residues 40-51 (KGKDSNHDRRTS) show a composition bias toward basic and acidic residues. Residues 63-74 (ETPPSLPPPPSP) show a composition bias toward pro residues. Over residues 91-109 (DSGNSSQSPTSPHPSNQPA) the composition is skewed to polar residues. A compositionally biased stretch (low complexity) spans 126 to 143 (SSSSYAVSPTSPTSPTSS). Residues Asp-248, His-250, Asp-276, and Asn-308 each coordinate Mn(2+). The active-site Proton donor is His-309. Residues His-357 and His-432 each contribute to the Mn(2+) site. 2 positions are modified to phosphoserine: Ser-505 and Ser-514.

It belongs to the PPP phosphatase family. PP-Z subfamily. Requires Mn(2+) as cofactor.

The protein resides in the cytoplasm. The enzyme catalyses O-phospho-L-seryl-[protein] + H2O = L-seryl-[protein] + phosphate. It catalyses the reaction O-phospho-L-threonyl-[protein] + H2O = L-threonyl-[protein] + phosphate. This is Serine/threonine-protein phosphatase PP-Z (pzh1) from Schizosaccharomyces pombe (strain 972 / ATCC 24843) (Fission yeast).